The primary structure comprises 82 residues: Turripeptide IX-04 (82 aa).

The N-terminal stretch at 1–21 (MGFYMLLTVALLLTSLMNVEA) is a signal peptide. Positions 22–39 (TPVDQAERSALEKSGLGN) are excised as a propeptide. 3 disulfides stabilise this stretch: C48/C70, C55/C74, and C60/C81.

As to expression, expressed by the venom duct.

It localises to the secreted. In Gemmula speciosa (Splendid gem-turris), this protein is Turripeptide IX-04.